Reading from the N-terminus, the 842-residue chain is Translation initiation factor IF-2 (842 aa).

A disordered region spans residues Q94 to V259. Residues S96 to A138 are compositionally biased toward basic and acidic residues. Positions A139–P148 are enriched in low complexity. Residues A149–A159 are compositionally biased toward pro residues. The span at P160 to D172 shows a compositional bias: low complexity. 2 stretches are compositionally biased toward basic and acidic residues: residues A173–A202 and T226–R235. Residues R236–Q249 show a composition bias toward basic residues. In terms of domain architecture, tr-type G spans S342–E509. The interval G351–T358 is G1. G351–T358 lines the GTP pocket. Positions G376 to H380 are G2. The tract at residues D397–G400 is G3. GTP contacts are provided by residues D397–H401 and N451–D454. The interval N451–D454 is G4. The G5 stretch occupies residues S487–K489.

It belongs to the TRAFAC class translation factor GTPase superfamily. Classic translation factor GTPase family. IF-2 subfamily.

It localises to the cytoplasm. Functionally, one of the essential components for the initiation of protein synthesis. Protects formylmethionyl-tRNA from spontaneous hydrolysis and promotes its binding to the 30S ribosomal subunits. Also involved in the hydrolysis of GTP during the formation of the 70S ribosomal complex. The sequence is that of Translation initiation factor IF-2 from Pseudomonas putida (strain GB-1).